The chain runs to 394 residues: Ribose-phosphate pyrophosphokinase 5, chloroplastic (394 aa).

The transit peptide at 1–33 (MASIVQPSPTFPALNLRRSSLIRPPSSVRFPLK) directs the protein to the chloroplast. Residues aspartate 202, histidine 204, aspartate 213, and aspartate 217 each contribute to the Mg(2+) site. The segment at 288-303 (GKVAIMVDDMIDTAGT) is binding of phosphoribosylpyrophosphate.

This sequence belongs to the ribose-phosphate pyrophosphokinase family.

Its subcellular location is the plastid. The protein resides in the chloroplast. The enzyme catalyses D-ribose 5-phosphate + ATP = 5-phospho-alpha-D-ribose 1-diphosphate + AMP + H(+). In Arabidopsis thaliana (Mouse-ear cress), this protein is Ribose-phosphate pyrophosphokinase 5, chloroplastic (PRS5).